Reading from the N-terminus, the 483-residue chain is UDP-N-acetylmuramate--L-alanine ligase (483 aa).

122–128 lines the ATP pocket; sequence GSHGKTT.

It belongs to the MurCDEF family.

The protein localises to the cytoplasm. It carries out the reaction UDP-N-acetyl-alpha-D-muramate + L-alanine + ATP = UDP-N-acetyl-alpha-D-muramoyl-L-alanine + ADP + phosphate + H(+). Its pathway is cell wall biogenesis; peptidoglycan biosynthesis. Functionally, cell wall formation. In Synechococcus sp. (strain CC9311), this protein is UDP-N-acetylmuramate--L-alanine ligase.